We begin with the raw amino-acid sequence, 59 residues long: Protein QUA-QUINE STARCH (59 aa).

As to expression, expressed in hypocotyls, leaves, vasculature, hydathodes, trichomes, pedicels, sepals, filaments, mature pollen, stigma papillae, styles, siliques, root and shoot tips, but not in shoot meristem, petals or root epidermis.

The protein resides in the cytoplasm. Functionally, involved in regulating carbon and nitrogen allocation to starch and protein. The chain is Protein QUA-QUINE STARCH from Arabidopsis thaliana (Mouse-ear cress).